The chain runs to 240 residues: MLPFWIALQFLSSLPVSLPGMPAPREVGRSLLYYPLVGLLFGLLLWLASHLLQGTPSPLHAALLLTLWVLLSGALHLDGLADSADAWLGGFGDRERTLRIMKDPRSGPIAVVTLVLVLLLKFCALWVLVGQGIGAQLLLAPLIGRAAMLGLFLGTPYVRPGGLGQALAEHLPRRAAGWVLLVCVLFCLFLGGWSVLLALAVFAWLRHLMCRRLGGTTGDTAGALLELLELAVVLGLALGL.

5 helical membrane passes run 31-51 (LLYY…ASHL), 62-81 (ALLL…DGLA), 109-129 (IAVV…WVLV), 133-153 (IGAQ…GLFL), and 179-199 (VLLV…LLAL).

Belongs to the CobS family. Requires Mg(2+) as cofactor.

It localises to the cell inner membrane. It catalyses the reaction alpha-ribazole + adenosylcob(III)inamide-GDP = adenosylcob(III)alamin + GMP + H(+). The enzyme catalyses alpha-ribazole 5'-phosphate + adenosylcob(III)inamide-GDP = adenosylcob(III)alamin 5'-phosphate + GMP + H(+). Its pathway is cofactor biosynthesis; adenosylcobalamin biosynthesis; adenosylcobalamin from cob(II)yrinate a,c-diamide: step 7/7. In terms of biological role, joins adenosylcobinamide-GDP and alpha-ribazole to generate adenosylcobalamin (Ado-cobalamin). Also synthesizes adenosylcobalamin 5'-phosphate from adenosylcobinamide-GDP and alpha-ribazole 5'-phosphate. The chain is Adenosylcobinamide-GDP ribazoletransferase from Pseudomonas putida (strain ATCC 700007 / DSM 6899 / JCM 31910 / BCRC 17059 / LMG 24140 / F1).